Reading from the N-terminus, the 482-residue chain is Serine decarboxylase 1 (482 aa).

The tract at residues 36–55 (EVESPPRPAEEEGEGSPTRR) is disordered. His200 lines the substrate pocket. N6-(pyridoxal phosphate)lysine is present on Lys312.

The protein belongs to the group II decarboxylase family. Pyridoxal 5'-phosphate serves as cofactor.

The enzyme catalyses L-serine + H(+) = ethanolamine + CO2. Functionally, catalyzes the biosynthesis of ethanolamine from serine. Decarboxylation of free serine is the major source of ethanolamine production in plants and ethanolamine metabolism is crucial for the synthesis of choline, phosphatidylethanolamine (PE) and phosphatidylcholine (PC), and thus for plant growth. The protein is Serine decarboxylase 1 (SDC1) of Oryza sativa subsp. japonica (Rice).